The following is an 84-amino-acid chain: Small ribosomal subunit protein bS16 (84 aa).

It belongs to the bacterial ribosomal protein bS16 family.

The protein is Small ribosomal subunit protein bS16 of Koribacter versatilis (strain Ellin345).